The chain runs to 419 residues: Peroxisomal membrane protein PMP47B (419 aa).

Solcar repeat units lie at residues 6–120, 142–230, and 239–369; these read YDDL…TGKT, LSVW…LKSF, and VTPV…LLIL. A helical transmembrane segment spans residues 12-32; the sequence is AFAGAGGGLLSMTLTYPLVTL. Positions 44 to 53 are enriched in basic and acidic residues; that stretch reads KNEEEEKENS. The tract at residues 44-69 is disordered; that stretch reads KNEEEEKENSNEDGSLSPKSSNTSNI. The span at 56–69 shows a compositional bias: polar residues; that stretch reads DGSLSPKSSNTSNI. Transmembrane regions (helical) follow at residues 98-118, 204-224, and 245-265; these read SALF…ELTG, FTGI…YTIF, and LLLG…YITL. The segment at 274 to 305 is disordered; sequence MTENNEDSEKERTDSVQSLPEDGSDEDNSKEN. 2 helical membrane passes run 310-330 and 349-369; these read TINK…IIGY and LLQS…LLIL.

This sequence belongs to the mitochondrial carrier (TC 2.A.29) family.

The protein resides in the peroxisome membrane. May have transport activity. The chain is Peroxisomal membrane protein PMP47B (PMP47B) from Candida boidinii (Yeast).